The sequence spans 554 residues: MTPLIFVTGGVVSSLGKGIAAASLASILEARGLKVTMMKLDPYINVDPGTMSPFQHGEVYVTDDGAETDLDLGHYERYVRTRLSRKNSVTTGRIYENVIRKERRGDYLGATVQVIPHITDEIRRCIDEATAGFDVALIEIGGTVGDIESLPFLEAIRQVRTERGAEKAMFMHLTLVPYIAAAGELKTKPTQHSVKELRSIGIQPDVLLCRSEQAVPDSERRKIALFTNVSERAVISCPDIDVLYGMPLELLRQGLDELVIVQFKLRDKVAAADLSEWAAVVDAVKHPLDEVTIAVVGKYVDHQDAYKSVAEALRHGGLRQRTKVNLKWLEAQDLERSDMAALQDIDGILVPGGFGDRGFEGKVQTSKFAREHKVPYFGICYGMQAAVVDYARHVADLDAANSTENDRQSPHPVIGLITEWRTATGEVEKRDEKSDLGGTMRLGLQEQRLKPGTLARELYGKDVVAERHRHRYEFNNRYRTQLEDAGLVISGKSMDDTLVEVVELPRDTHPWFLACQAHPEFLSTPRDGHPLFIGFVRAAREKKAGGKLLKEARA.

The tract at residues 1–265 is amidoligase domain; the sequence is MTPLIFVTGG…DELVIVQFKL (265 aa). Ser13 provides a ligand contact to CTP. Residue Ser13 participates in UTP binding. Residues 14-19 and Asp71 contribute to the ATP site; that span reads SLGKGI. Positions 71 and 139 each coordinate Mg(2+). Residues 146 to 148, 186 to 191, and Lys222 each bind CTP; these read DIE and KTKPTQ. Residues 186 to 191 and Lys222 each bind UTP; that span reads KTKPTQ. The Glutamine amidotransferase type-1 domain occupies 292 to 545; that stretch reads TIAVVGKYVD…VRAAREKKAG (254 aa). Residue Gly353 participates in L-glutamine binding. Catalysis depends on Cys380, which acts as the Nucleophile; for glutamine hydrolysis. Residues 381-384, Glu404, and Arg471 each bind L-glutamine; that span reads YGMQ. Active-site residues include His518 and Glu520.

This sequence belongs to the CTP synthase family. As to quaternary structure, homotetramer.

The enzyme catalyses UTP + L-glutamine + ATP + H2O = CTP + L-glutamate + ADP + phosphate + 2 H(+). It carries out the reaction L-glutamine + H2O = L-glutamate + NH4(+). The catalysed reaction is UTP + NH4(+) + ATP = CTP + ADP + phosphate + 2 H(+). It participates in pyrimidine metabolism; CTP biosynthesis via de novo pathway; CTP from UDP: step 2/2. Its activity is regulated as follows. Allosterically activated by GTP, when glutamine is the substrate; GTP has no effect on the reaction when ammonia is the substrate. The allosteric effector GTP functions by stabilizing the protein conformation that binds the tetrahedral intermediate(s) formed during glutamine hydrolysis. Inhibited by the product CTP, via allosteric rather than competitive inhibition. Functionally, catalyzes the ATP-dependent amination of UTP to CTP with either L-glutamine or ammonia as the source of nitrogen. Regulates intracellular CTP levels through interactions with the four ribonucleotide triphosphates. The sequence is that of CTP synthase from Xanthomonas oryzae pv. oryzae (strain MAFF 311018).